Consider the following 486-residue polypeptide: LON peptidase N-terminal domain and RING finger protein C14F5.10c (486 aa).

Residues 169 to 207 (CQICFGMLYDPVVSPCGHTFCGPCLMQALTQSPQCPTCR) form an RING-type zinc finger. Residues 250 to 472 (ESWLPLFISM…LVLIWLTQLQ (223 aa)) enclose the Lon N-terminal domain.

This Schizosaccharomyces pombe (strain 972 / ATCC 24843) (Fission yeast) protein is LON peptidase N-terminal domain and RING finger protein C14F5.10c.